We begin with the raw amino-acid sequence, 528 residues long: DNA damage-binding protein cmr1 (528 aa).

Disordered regions lie at residues 32 to 98 (AQSS…QYEA) and 217 to 243 (DASQEKPTSAVKQEDDEEDAEDDDPDP). Basic residues predominate over residues 52 to 62 (KPKKKPPPKKV). The WD 1 repeat unit spans residues 185–226 (LTPERIYTMTFHPSEAKPLIFAGDKMGNLGVLDASQEKPTSA). Residues 230–242 (EDDEEDAEDDDPD) show a composition bias toward acidic residues. WD repeat units follow at residues 250 to 290 (PHTR…SVEK), 297 to 337 (SDDI…RSAV), 342 to 382 (LSEK…HDDP), 389 to 428 (VSRLSVSHAAFNSAGQIATSSYDDTLKIYDFGSKGIAAWE), 451 to 494 (GRWV…LAQL), and 497 to 528 (DGITAVPAVAVFHCSTNWIAGGTASGKICLWM).

The protein belongs to the WD repeat DDB2/WDR76 family.

DNA-binding protein that binds to both single- and double-stranded DNA. Binds preferentially to UV-damaged DNA. May be involved in DNA-metabolic processes. This Aspergillus fumigatus (strain CBS 144.89 / FGSC A1163 / CEA10) (Neosartorya fumigata) protein is DNA damage-binding protein cmr1.